The primary structure comprises 177 residues: ATP synthase subunit delta (177 aa).

The protein belongs to the ATPase delta chain family. As to quaternary structure, F-type ATPases have 2 components, F(1) - the catalytic core - and F(0) - the membrane proton channel. F(1) has five subunits: alpha(3), beta(3), gamma(1), delta(1), epsilon(1). F(0) has three main subunits: a(1), b(2) and c(10-14). The alpha and beta chains form an alternating ring which encloses part of the gamma chain. F(1) is attached to F(0) by a central stalk formed by the gamma and epsilon chains, while a peripheral stalk is formed by the delta and b chains.

The protein resides in the cell inner membrane. F(1)F(0) ATP synthase produces ATP from ADP in the presence of a proton or sodium gradient. F-type ATPases consist of two structural domains, F(1) containing the extramembraneous catalytic core and F(0) containing the membrane proton channel, linked together by a central stalk and a peripheral stalk. During catalysis, ATP synthesis in the catalytic domain of F(1) is coupled via a rotary mechanism of the central stalk subunits to proton translocation. Its function is as follows. This protein is part of the stalk that links CF(0) to CF(1). It either transmits conformational changes from CF(0) to CF(1) or is implicated in proton conduction. The polypeptide is ATP synthase subunit delta (Vibrio alginolyticus).